The primary structure comprises 216 residues: ATP-dependent Clp protease proteolytic subunit (216 aa).

The active-site Nucleophile is Ser-101. His-126 is a catalytic residue.

The protein belongs to the peptidase S14 family. As to quaternary structure, component of the chloroplastic Clp protease core complex.

It localises to the plastid. It is found in the chloroplast stroma. It catalyses the reaction Hydrolysis of proteins to small peptides in the presence of ATP and magnesium. alpha-casein is the usual test substrate. In the absence of ATP, only oligopeptides shorter than five residues are hydrolyzed (such as succinyl-Leu-Tyr-|-NHMec, and Leu-Tyr-Leu-|-Tyr-Trp, in which cleavage of the -Tyr-|-Leu- and -Tyr-|-Trp bonds also occurs).. Functionally, cleaves peptides in various proteins in a process that requires ATP hydrolysis. Has a chymotrypsin-like activity. Plays a major role in the degradation of misfolded proteins. The polypeptide is ATP-dependent Clp protease proteolytic subunit (Hordeum vulgare (Barley)).